Reading from the N-terminus, the 465-residue chain is GDNF family receptor alpha-1 (465 aa).

Positions Met1 to Gly24 are cleaved as a signal peptide. 3 tandem repeats follow at residues Asp25–Asn113, Lys150–Arg238, and Glu239–Ile342. Cysteines 36 and 42 form a disulfide. N-linked (GlcNAc...) asparagine glycosylation occurs at Asn59. Cystine bridges form between Cys154–Cys214, Cys161–Cys167, Cys178–Cys192, Cys187–Cys233, Cys216–Cys221, Cys243–Cys313, Cys250–Cys256, Cys267–Cys285, Cys277–Cys337, and Cys315–Cys325. Residues Asn347 and Asn406 are each glycosylated (N-linked (GlcNAc...) asparagine). Ser429 is lipidated: GPI-anchor amidated serine. Positions His430–Ser465 are cleaved as a propeptide — removed in mature form.

This sequence belongs to the GDNFR family. Interacts with GDNF ligand and RET: forms a 2:2:2 ternary complex composed of GDNF ligand, GFRA1 and RET receptor. Interacts with SORL1, either alone or in complex with GDNF. Interaction between SORL1 and GFRA1 leads to GFRA1 internalization, but not degradation.

The protein localises to the cell membrane. It is found in the golgi apparatus. The protein resides in the trans-Golgi network. It localises to the endosome. Its subcellular location is the multivesicular body. Functionally, coreceptor for GDNF, a neurotrophic factor that enhances survival and morphological differentiation of dopaminergic neurons and increases their high-affinity dopamine uptake. GDNF-binding leads to autophosphorylation and activation of the RET receptor. The sequence is that of GDNF family receptor alpha-1 (GFRA1) from Homo sapiens (Human).